Here is a 183-residue protein sequence, read N- to C-terminus: Large ribosomal subunit protein uL10 (183 aa).

The protein belongs to the universal ribosomal protein uL10 family. Part of the ribosomal stalk of the 50S ribosomal subunit. The N-terminus interacts with L11 and the large rRNA to form the base of the stalk. The C-terminus forms an elongated spine to which L12 dimers bind in a sequential fashion forming a multimeric L10(L12)X complex.

In terms of biological role, forms part of the ribosomal stalk, playing a central role in the interaction of the ribosome with GTP-bound translation factors. This is Large ribosomal subunit protein uL10 from Mesomycoplasma hyopneumoniae (strain 232) (Mycoplasma hyopneumoniae).